The chain runs to 31 residues: Photosystem I reaction center subunit XII (31 aa).

A helical membrane pass occupies residues 7–26 (QIFIALLTALIPAFFALKLG).

This sequence belongs to the PsaM family.

The protein localises to the plastid. It is found in the chloroplast thylakoid membrane. The chain is Photosystem I reaction center subunit XII from Euglena granulata.